We begin with the raw amino-acid sequence, 197 residues long: Glycerol-3-phosphate acyltransferase (197 aa).

A run of 4 helical transmembrane segments spans residues Met-1–Val-21, Leu-69–Gly-89, Val-110–Leu-130, and Val-152–Phe-172.

The protein belongs to the PlsY family. Probably interacts with PlsX.

Its subcellular location is the cell membrane. The catalysed reaction is an acyl phosphate + sn-glycerol 3-phosphate = a 1-acyl-sn-glycero-3-phosphate + phosphate. The protein operates within lipid metabolism; phospholipid metabolism. In terms of biological role, catalyzes the transfer of an acyl group from acyl-phosphate (acyl-PO(4)) to glycerol-3-phosphate (G3P) to form lysophosphatidic acid (LPA). This enzyme utilizes acyl-phosphate as fatty acyl donor, but not acyl-CoA or acyl-ACP. The polypeptide is Glycerol-3-phosphate acyltransferase (Geobacillus kaustophilus (strain HTA426)).